The chain runs to 420 residues: UDP-glucuronic acid decarboxylase 1 (420 aa).

The residue at position 1 (Met1) is an N-acetylmethionine. The Cytoplasmic segment spans residues 1–19 (MVSKALLRLVSAVNRRRMK). The chain crosses the membrane as a helical; Signal-anchor for type II membrane protein span at residues 20–40 (LLLGIALLAYVASVWGNFVNM). The Lumenal portion of the chain corresponds to 41–420 (RSIQENGELK…RIKKGRTRHN (380 aa)). At Thr94 the chain carries Phosphothreonine. Positions 98, 99, 100, 119, 120, 122, 123, 124, 144, and 145 each coordinate NAD(+). The UDP-alpha-D-glucuronate site is built by Leu149 and Tyr150. The NAD(+) site is built by Leu159 and Ser161. UDP-alpha-D-glucuronate is bound at residue Lys177. Thr178 is an NAD(+) binding site. The UDP-alpha-D-glucuronate site is built by Asn185, Gly188, Lys191, and Arg192. Positions 200, 231, and 235 each coordinate NAD(+). The Proton acceptor role is filled by Tyr231. UDP-alpha-D-glucuronate-binding residues include Tyr245, Gln248, and Glu249. NAD(+)-binding residues include Thr261, His267, and Arg272. A glycan (N-linked (GlcNAc...) asparagine) is linked at Asn316.

It belongs to the NAD(P)-dependent epimerase/dehydratase family. UDP-glucuronic acid decarboxylase subfamily. In terms of assembly, homodimer and homotetramer. Interacts with AKT1. The cofactor is NAD(+).

It is found in the golgi apparatus. The protein localises to the golgi stack membrane. The enzyme catalyses UDP-alpha-D-glucuronate + H(+) = UDP-alpha-D-xylose + CO2. It functions in the pathway nucleotide-sugar biosynthesis; UDP-alpha-D-xylose biosynthesis; UDP-alpha-D-xylose from UDP-alpha-D-glucuronate: step 1/1. Its function is as follows. Catalyzes the NAD-dependent decarboxylation of UDP-glucuronic acid to UDP-xylose. Necessary for the biosynthesis of the core tetrasaccharide in glycosaminoglycan biosynthesis. The protein is UDP-glucuronic acid decarboxylase 1 (UXS1) of Pongo abelii (Sumatran orangutan).